The chain runs to 160 residues: Archaemetzincin (160 aa).

Zn(2+) is bound at residue histidine 117. The active-site Proton acceptor is the glutamate 118. Zn(2+) is bound by residues histidine 121, histidine 127, cysteine 128, cysteine 132, cysteine 151, and cysteine 154.

It belongs to the peptidase M54 family. Monomer. Zn(2+) serves as cofactor.

Functionally, probable zinc metalloprotease whose natural substrate is unknown. The sequence is that of Archaemetzincin from Archaeoglobus fulgidus (strain ATCC 49558 / DSM 4304 / JCM 9628 / NBRC 100126 / VC-16).